Reading from the N-terminus, the 1235-residue chain is ATP-dependent helicase/nuclease subunit A (1235 aa).

The UvrD-like helicase ATP-binding domain occupies 12 to 482 (TLWTDDQWKA…IDLSQNFRSR (471 aa)). 33–40 (AAAGSGKT) provides a ligand contact to ATP. Residues 509–800 (AAELTLGANF…RMMTIHASKG (292 aa)) enclose the UvrD-like helicase C-terminal domain.

Belongs to the helicase family. AddA subfamily. As to quaternary structure, heterodimer of AddA and AddB/RexB. The cofactor is Mg(2+).

It carries out the reaction Couples ATP hydrolysis with the unwinding of duplex DNA by translocating in the 3'-5' direction.. It catalyses the reaction ATP + H2O = ADP + phosphate + H(+). Functionally, the heterodimer acts as both an ATP-dependent DNA helicase and an ATP-dependent, dual-direction single-stranded exonuclease. Recognizes the chi site generating a DNA molecule suitable for the initiation of homologous recombination. The AddA nuclease domain is required for chi fragment generation; this subunit has the helicase and 3' -&gt; 5' nuclease activities. This Listeria welshimeri serovar 6b (strain ATCC 35897 / DSM 20650 / CCUG 15529 / CIP 8149 / NCTC 11857 / SLCC 5334 / V8) protein is ATP-dependent helicase/nuclease subunit A.